Here is a 259-residue protein sequence, read N- to C-terminus: MQSDFHRMKNFANPKSMFKTSAPSTEQGRPEPPTSAAAPAEAKDVKPKEDPQETGEPAGNTATTTAPAGDDAVRTEHLYKHPLMNVWTLWYLENDRSKSWEDMQNEITSFDTVEDFWSLYNHIKPPSEIKLGSDYSLFKKNIRPMWEDAANKQGGRWVITLNKSSKTDLDNLWLDVLLCLIGEAFDHSDQICGAVINIRGKSNKISIWTADGNNEEAALEIGHKLRDALRLGRNNSLQYQLHKDTMVKQGSNVKSIYTL.

Positions methionine 1 to aspartate 70 are disordered. Positions phenylalanine 18–glutamine 27 are enriched in polar residues. Residues glutamate 41–proline 51 are compositionally biased toward basic and acidic residues. Low complexity predominate over residues threonine 54–aspartate 70. Residues tryptophan 100–glutamate 101, tryptophan 146–glutamate 147, and arginine 199–lysine 204 contribute to the mRNA site.

Belongs to the eukaryotic initiation factor 4E family. In terms of assembly, eIF4F is a multi-subunit complex, the composition of which varies with external and internal environmental conditions. It is composed of at least eIF4A, eIF4E1 and eIF4G1. Recruited by cup in oocytes and in early embryos, preventing the interaction with eIF4G. The interaction with cup therefore prevents the translation of key transcripts such as oskar (osk) and nanos (nos) in some regions in the early embryo. Interacts with mxt. Interacts with 4E-T and Thor. Forms a RNP containing at least me31B, eIF4E1, cup, tral and pAbp; this interaction is required for the translational silencing of maternal mRNAs during the maternal-to-zygotic transition. Post-translationally, phosphorylation increases the ability of the protein to bind to mRNA caps and to form the eIF4F complex. Expressed at the posterior end of developing oocytes (at protein level). Preferential expression in the pole cells, at different developmental stages.

The protein resides in the cytoplasm. Its subcellular location is the cytoplasmic ribonucleoprotein granule. The protein localises to the nucleus. It localises to the nuclear body. Functionally, recognizes and binds the 7-methylguanosine (m7G)-containing mRNA cap during an early step in the initiation of protein synthesis and facilitates ribosome binding by inducing the unwinding of the mRNAs secondary structures. In 0-1 hour embryos, forms a complex with me31B, cup, tral and pAbp which binds to various mRNAs including maternal mRNAs, and down-regulates their expression during the maternal-to-zygotic transition. This is Eukaryotic translation initiation factor 4E1 from Drosophila melanogaster (Fruit fly).